A 552-amino-acid polypeptide reads, in one-letter code: Acyl-CoA synthetase FUM10 (552 aa).

Position 183–194 (183–194) interacts with AMP; it reads ELFTSGTTGAPK. Residues 463–536 form an AMP-binding region; sequence EIEHVARLHD…QEIPYNRTGK (74 aa).

Belongs to the ATP-dependent AMP-binding enzyme family.

It functions in the pathway mycotoxin biosynthesis. Acyl-CoA synthetase; part of the gene cluster that mediates the biosynthesis of fumonisins B1 (FB1), B2 (FB2), B3 (FB3), and B4 (FB4), which are carcinogenic mycotoxins. Within the pathway, FUM10 is involved the addition of the tricarballylic moieties to the carbon backbone. FUM10 catalyzes the CoA activation of citrate to form tricarballylic acid. The biosynthesis starts with the FUM1-catalyzed carbon chain assembly from one molecule of acetyl-CoA, eight molecules of malonyl-CoA, and two molecules of methionine (in S-adenosyl form). The C18 polyketide chain is released from the enzyme by a nucleophilic attack of a carbanion, which is derived from R-carbon of alanine by decarboxylation, on the carbonyl carbon of polyketide acyl chain. This step is catalyzed by the pyridoxal 5'-phosphate-dependent aminoacyl transferase FUM8. The resultant 3-keto intermediate is then stereospecifically reduced to a 3-hydroxyl product by reductase FUM13. Subsequent oxidations at C-10 by the cytochrome P450 monooxygenase FUM2, C-14 and C-15 by FUM6, FUM12 or FUM15, tricarballylic esterification of the hydroxyl groups on C-14 and C-15 by acyltransferase FUM14, and C-5 hydroxylation by 2-keto-glutarate-dependent dioxygenase FUM3 furnish the biosynthesis of fumonisins. The tricarballylic moieties are most likely derived from the citric acid cycle, and their addition to the carbon backbone may involve FUM7, FUM10, FUM11 and FUM14. The protein is Acyl-CoA synthetase FUM10 of Gibberella moniliformis (strain M3125 / FGSC 7600) (Maize ear and stalk rot fungus).